The sequence spans 297 residues: Mitochondrial thiamine pyrophosphate carrier 1 (297 aa).

Solcar repeat units lie at residues 13-94 (SHVF…TNAA), 102-195 (PPTI…IRAR), and 196-295 (WPET…LMRV). The next 6 helical transmembrane spans lie at 19 to 36 (LVSG…IAPL), 75 to 91 (IMYI…YSYT), 109 to 128 (LAGA…FDVL), 163 to 187 (GLGG…AMFG), 203 to 219 (TAGA…TFPL), and 270 to 287 (GIGL…INLW).

This sequence belongs to the mitochondrial carrier (TC 2.A.29) family.

It is found in the mitochondrion inner membrane. Functionally, mitochondrial transporter that mediates uptake of thiamine pyrophosphate (ThPP) into mitochondria. This chain is Mitochondrial thiamine pyrophosphate carrier 1 (TPC1), found in Vanderwaltozyma polyspora (strain ATCC 22028 / DSM 70294 / BCRC 21397 / CBS 2163 / NBRC 10782 / NRRL Y-8283 / UCD 57-17) (Kluyveromyces polysporus).